Here is an 86-residue protein sequence, read N- to C-terminus: Anti-adapter protein IraP (86 aa).

A coiled-coil region spans residues 1-36 (MKNLIAELLVKLAEKEEESKELVAQVEALEIVVTAL).

This sequence belongs to the IraP family. In terms of assembly, interacts with RssB.

The protein localises to the cytoplasm. Its function is as follows. Inhibits RpoS proteolysis by regulating RssB activity, thereby increasing the stability of the sigma stress factor RpoS especially during phosphate starvation, but also in stationary phase and during nitrogen starvation. Its effect on RpoS stability is due to its interaction with RssB, which probably blocks the interaction of RssB with RpoS, and the consequent delivery of the RssB-RpoS complex to the ClpXP protein degradation pathway. This chain is Anti-adapter protein IraP, found in Cronobacter sakazakii (strain ATCC BAA-894) (Enterobacter sakazakii).